A 334-amino-acid chain; its full sequence is Probable tRNA pseudouridine synthase B (334 aa).

D82 serves as the catalytic Nucleophile. Residues 250 to 325 (LPKVWIRDSA…IAVDVDKVFM (76 aa)) enclose the PUA domain.

The protein belongs to the pseudouridine synthase TruB family. Type 2 subfamily.

The enzyme catalyses uridine(55) in tRNA = pseudouridine(55) in tRNA. In terms of biological role, could be responsible for synthesis of pseudouridine from uracil-55 in the psi GC loop of transfer RNAs. This Thermococcus gammatolerans (strain DSM 15229 / JCM 11827 / EJ3) protein is Probable tRNA pseudouridine synthase B.